Here is a 156-residue protein sequence, read N- to C-terminus: Cyclic pyranopterin monophosphate synthase (156 aa).

Substrate-binding positions include 73 to 75 (LCH) and 110 to 111 (ME). D125 is a catalytic residue.

The protein belongs to the MoaC family. As to quaternary structure, homohexamer; trimer of dimers.

The catalysed reaction is (8S)-3',8-cyclo-7,8-dihydroguanosine 5'-triphosphate = cyclic pyranopterin phosphate + diphosphate. Its pathway is cofactor biosynthesis; molybdopterin biosynthesis. Its function is as follows. Catalyzes the conversion of (8S)-3',8-cyclo-7,8-dihydroguanosine 5'-triphosphate to cyclic pyranopterin monophosphate (cPMP). The protein is Cyclic pyranopterin monophosphate synthase of Pseudomonas putida (strain W619).